Consider the following 519-residue polypeptide: Ribonuclease Y 1 (519 aa).

The helical transmembrane segment at 2–22 (IILYIILAIIAIVVGYCAGFF) threads the bilayer. The tract at residues 84 to 113 (QKQEDRLLQREDSLDRKDNSFEKRENSLER) is disordered. Positions 209 to 294 (TITVVSLPND…EMVEKAKKEM (86 aa)) constitute a KH domain. One can recognise an HD domain in the interval 335 to 428 (VLNHSIEVAN…VAAANSISAA (94 aa)).

The protein belongs to the RNase Y family.

The protein resides in the cell membrane. In terms of biological role, endoribonuclease that initiates mRNA decay. The polypeptide is Ribonuclease Y 1 (Pediococcus pentosaceus (strain ATCC 25745 / CCUG 21536 / LMG 10740 / 183-1w)).